We begin with the raw amino-acid sequence, 349 residues long: Phosphoribosylformylglycinamidine cyclo-ligase (349 aa).

The protein belongs to the AIR synthase family.

The protein resides in the cytoplasm. It catalyses the reaction 2-formamido-N(1)-(5-O-phospho-beta-D-ribosyl)acetamidine + ATP = 5-amino-1-(5-phospho-beta-D-ribosyl)imidazole + ADP + phosphate + H(+). It participates in purine metabolism; IMP biosynthesis via de novo pathway; 5-amino-1-(5-phospho-D-ribosyl)imidazole from N(2)-formyl-N(1)-(5-phospho-D-ribosyl)glycinamide: step 2/2. In Lactobacillus delbrueckii subsp. bulgaricus (strain ATCC BAA-365 / Lb-18), this protein is Phosphoribosylformylglycinamidine cyclo-ligase.